Here is a 280-residue protein sequence, read N- to C-terminus: 4-diphosphocytidyl-2-C-methyl-D-erythritol kinase (280 aa).

Residue Lys-8 is part of the active site. Position 91–101 (91–101 (PVSAGLAGGST)) interacts with ATP. Asp-133 is a catalytic residue.

The protein belongs to the GHMP kinase family. IspE subfamily.

The catalysed reaction is 4-CDP-2-C-methyl-D-erythritol + ATP = 4-CDP-2-C-methyl-D-erythritol 2-phosphate + ADP + H(+). It participates in isoprenoid biosynthesis; isopentenyl diphosphate biosynthesis via DXP pathway; isopentenyl diphosphate from 1-deoxy-D-xylulose 5-phosphate: step 3/6. In terms of biological role, catalyzes the phosphorylation of the position 2 hydroxy group of 4-diphosphocytidyl-2C-methyl-D-erythritol. The sequence is that of 4-diphosphocytidyl-2-C-methyl-D-erythritol kinase from Clostridium botulinum (strain Eklund 17B / Type B).